The primary structure comprises 97 residues: DNA-directed RNA polymerase subunit omega (97 aa).

Belongs to the RNA polymerase subunit omega family. The RNAP catalytic core consists of 2 alpha, 1 beta, 1 beta' and 1 omega subunit. When a sigma factor is associated with the core the holoenzyme is formed, which can initiate transcription.

The enzyme catalyses RNA(n) + a ribonucleoside 5'-triphosphate = RNA(n+1) + diphosphate. Functionally, promotes RNA polymerase assembly. Latches the N- and C-terminal regions of the beta' subunit thereby facilitating its interaction with the beta and alpha subunits. This is DNA-directed RNA polymerase subunit omega from Corynebacterium glutamicum (strain ATCC 13032 / DSM 20300 / JCM 1318 / BCRC 11384 / CCUG 27702 / LMG 3730 / NBRC 12168 / NCIMB 10025 / NRRL B-2784 / 534).